A 130-amino-acid chain; its full sequence is Flagellar assembly factor FliW (130 aa).

Belongs to the FliW family. As to quaternary structure, interacts with translational regulator CsrA and flagellin(s).

It localises to the cytoplasm. Its function is as follows. Acts as an anti-CsrA protein, binds CsrA and prevents it from repressing translation of its target genes, one of which is flagellin. Binds to flagellin and participates in the assembly of the flagellum. This is Flagellar assembly factor FliW from Borrelia hermsii (strain HS1 / DAH).